The sequence spans 20 residues: Hemocyanin subunit Ia (20 aa).

Residues 1–20 (ADXQPGDSTDKLLAQKQDDV) form a disordered region.

Belongs to the tyrosinase family. Hemocyanin subfamily. As to quaternary structure, composed of 3 major subunits (IB, II and III) and 1 minor subunit (IA) which form homohexamers and heterohexamers. May also form larger structures. Hemolymph.

Its subcellular location is the secreted. It localises to the extracellular space. Functionally, hemocyanins are copper-containing oxygen carriers occurring freely dissolved in the hemolymph of many mollusks and arthropods. The chain is Hemocyanin subunit Ia from Panulirus japonicus (Japanese spiny lobster).